We begin with the raw amino-acid sequence, 325 residues long: Holliday junction branch migration complex subunit RuvB (325 aa).

The tract at residues 1–172 (MENNELLDIT…FGVVFRLEFY (172 aa)) is large ATPase domain (RuvB-L). Residues Leu11, Arg12, Gly53, Lys56, Thr57, Thr58, 119-121 (EDF), Arg162, Tyr172, and Arg209 each bind ATP. Mg(2+) is bound at residue Thr57. Residues 173 to 243 (NSEELKEIVK…IAQEALIAMD (71 aa)) form a small ATPAse domain (RuvB-S) region. A head domain (RuvB-H) region spans residues 246–325 (DYGLDDMDRK…LKRKIPERLF (80 aa)). DNA is bound by residues Arg301 and Arg306.

It belongs to the RuvB family. In terms of assembly, homohexamer. Forms an RuvA(8)-RuvB(12)-Holliday junction (HJ) complex. HJ DNA is sandwiched between 2 RuvA tetramers; dsDNA enters through RuvA and exits via RuvB. An RuvB hexamer assembles on each DNA strand where it exits the tetramer. Each RuvB hexamer is contacted by two RuvA subunits (via domain III) on 2 adjacent RuvB subunits; this complex drives branch migration. In the full resolvosome a probable DNA-RuvA(4)-RuvB(12)-RuvC(2) complex forms which resolves the HJ.

The protein resides in the cytoplasm. The enzyme catalyses ATP + H2O = ADP + phosphate + H(+). Its function is as follows. The RuvA-RuvB-RuvC complex processes Holliday junction (HJ) DNA during genetic recombination and DNA repair, while the RuvA-RuvB complex plays an important role in the rescue of blocked DNA replication forks via replication fork reversal (RFR). RuvA specifically binds to HJ cruciform DNA, conferring on it an open structure. The RuvB hexamer acts as an ATP-dependent pump, pulling dsDNA into and through the RuvAB complex. RuvB forms 2 homohexamers on either side of HJ DNA bound by 1 or 2 RuvA tetramers; 4 subunits per hexamer contact DNA at a time. Coordinated motions by a converter formed by DNA-disengaged RuvB subunits stimulates ATP hydrolysis and nucleotide exchange. Immobilization of the converter enables RuvB to convert the ATP-contained energy into a lever motion, pulling 2 nucleotides of DNA out of the RuvA tetramer per ATP hydrolyzed, thus driving DNA branch migration. The RuvB motors rotate together with the DNA substrate, which together with the progressing nucleotide cycle form the mechanistic basis for DNA recombination by continuous HJ branch migration. Branch migration allows RuvC to scan DNA until it finds its consensus sequence, where it cleaves and resolves cruciform DNA. This chain is Holliday junction branch migration complex subunit RuvB, found in Thermodesulfovibrio yellowstonii (strain ATCC 51303 / DSM 11347 / YP87).